The chain runs to 466 residues: Probable sensor protein PcoS (466 aa).

Residues methionine 1 to arginine 10 are Cytoplasmic-facing. Residues leucine 11–isoleucine 31 traverse the membrane as a helical segment. Residues serine 32–threonine 171 are Periplasmic-facing. Residues tryptophan 172–threonine 192 form a helical membrane-spanning segment. In terms of domain architecture, HAMP spans arginine 193–arginine 246. The Cytoplasmic portion of the chain corresponds to arginine 193–aspartate 466. Residues aspartate 254 to aspartate 466 enclose the Histidine kinase domain. Residue histidine 257 is modified to Phosphohistidine; by autocatalysis.

It is found in the cell inner membrane. It catalyses the reaction ATP + protein L-histidine = ADP + protein N-phospho-L-histidine.. Functionally, probable member of a two-component regulatory system PcoS/PcoR. May activate PcoR by phosphorylation. The chain is Probable sensor protein PcoS (pcoS) from Escherichia coli.